Consider the following 262-residue polypeptide: Phosphatidylserine decarboxylase proenzyme (262 aa).

Active-site charge relay system; for autoendoproteolytic cleavage activity residues include aspartate 86, histidine 142, and serine 226. Residue serine 226 is the Schiff-base intermediate with substrate; via pyruvic acid; for decarboxylase activity of the active site. Pyruvic acid (Ser); by autocatalysis is present on serine 226.

Belongs to the phosphatidylserine decarboxylase family. PSD-B subfamily. Prokaryotic type I sub-subfamily. Heterodimer of a large membrane-associated beta subunit and a small pyruvoyl-containing alpha subunit. The cofactor is pyruvate. Post-translationally, is synthesized initially as an inactive proenzyme. Formation of the active enzyme involves a self-maturation process in which the active site pyruvoyl group is generated from an internal serine residue via an autocatalytic post-translational modification. Two non-identical subunits are generated from the proenzyme in this reaction, and the pyruvate is formed at the N-terminus of the alpha chain, which is derived from the carboxyl end of the proenzyme. The autoendoproteolytic cleavage occurs by a canonical serine protease mechanism, in which the side chain hydroxyl group of the serine supplies its oxygen atom to form the C-terminus of the beta chain, while the remainder of the serine residue undergoes an oxidative deamination to produce ammonia and the pyruvoyl prosthetic group on the alpha chain. During this reaction, the Ser that is part of the protease active site of the proenzyme becomes the pyruvoyl prosthetic group, which constitutes an essential element of the active site of the mature decarboxylase.

Its subcellular location is the cell membrane. It catalyses the reaction a 1,2-diacyl-sn-glycero-3-phospho-L-serine + H(+) = a 1,2-diacyl-sn-glycero-3-phosphoethanolamine + CO2. Its pathway is phospholipid metabolism; phosphatidylethanolamine biosynthesis; phosphatidylethanolamine from CDP-diacylglycerol: step 2/2. In terms of biological role, catalyzes the formation of phosphatidylethanolamine (PtdEtn) from phosphatidylserine (PtdSer). This Bacillus cereus (strain AH820) protein is Phosphatidylserine decarboxylase proenzyme.